Here is a 142-residue protein sequence, read N- to C-terminus: Large ribosomal subunit protein uL13c (142 aa).

This sequence belongs to the universal ribosomal protein uL13 family. As to quaternary structure, part of the 50S ribosomal subunit.

It is found in the plastid. Its subcellular location is the chloroplast. This is Large ribosomal subunit protein uL13c from Porphyra purpurea (Red seaweed).